We begin with the raw amino-acid sequence, 255 residues long: Probable iron chelatin transport ATP-binding protein HP_0888 (255 aa).

The ABC transporter domain maps to 3-240 (LEVKNLSFKY…HNLSALYDTP (238 aa)). An ATP-binding site is contributed by 35–42 (APNGSGKT).

The protein belongs to the ABC transporter superfamily.

It localises to the cell inner membrane. Its function is as follows. Part of a binding-protein-dependent transport system for an iron chelatin. Probably responsible for energy coupling to the transport system (Potential). The chain is Probable iron chelatin transport ATP-binding protein HP_0888 from Helicobacter pylori (strain ATCC 700392 / 26695) (Campylobacter pylori).